Here is a 590-residue protein sequence, read N- to C-terminus: Arginine--tRNA ligase (590 aa).

Positions 130–140 (ANPTGPMHVGH) match the 'HIGH' region motif.

The protein belongs to the class-I aminoacyl-tRNA synthetase family. Monomer.

Its subcellular location is the cytoplasm. It catalyses the reaction tRNA(Arg) + L-arginine + ATP = L-arginyl-tRNA(Arg) + AMP + diphosphate. The protein is Arginine--tRNA ligase of Methylobacterium nodulans (strain LMG 21967 / CNCM I-2342 / ORS 2060).